The sequence spans 244 residues: MRFQTPLVPARLVRRYNRFLSDAVLEDTGEEVRAHCPNPGAMLGLKDAGQRIWLEPNDDPKKKLRYGWRLVELADGHMAGIDTSVPNKVVGEALAARAITELAAYGTIRAEVKYGTNSRVDFLATEPGLPDTYVEVKNVHLRRAEDWAEFPDSVTTRGAKHLAELARMVEAGHRAVMLYLVQRTDCTRLRLAPDLDPSYARAFDAARATGVEMLCYGTLIDTGGVTLGRALPVDPAAQAPQNED.

It belongs to the SfsA family.

The chain is Sugar fermentation stimulation protein homolog from Dinoroseobacter shibae (strain DSM 16493 / NCIMB 14021 / DFL 12).